Consider the following 329-residue polypeptide: Malate dehydrogenase (329 aa).

12 to 18 is an NAD(+) binding site; it reads GAAGQIG. 2 residues coordinate substrate: Arg93 and Arg99. NAD(+) contacts are provided by residues Asn106, Gln113, and 130–132; that span reads TGN. Residues Asn132 and Arg163 each coordinate substrate. His188 serves as the catalytic Proton acceptor.

This sequence belongs to the LDH/MDH superfamily. MDH type 2 family.

It carries out the reaction (S)-malate + NAD(+) = oxaloacetate + NADH + H(+). In terms of biological role, catalyzes the reversible oxidation of malate to oxaloacetate. The chain is Malate dehydrogenase from Mycobacterium avium (strain 104).